The sequence spans 209 residues: Protein Bel-1 (209 aa).

Disordered stretches follow at residues 1–30 (MASKYPEEGPITEGVEEDFNSHSTSGLDLT), 123–143 (FLNSRKESGTPKTDPTRPATS), and 156–185 (CSRPTPSNSESVCNGLGQPSERGHTSGESG). Polar residues-rich tracts occupy residues 21–30 (SHSTSGLDLT) and 132–143 (TPKTDPTRPATS).

Its function is as follows. Transcriptional transactivator that activates the viral internal promoter (IP), thereby enhancing its own expression. This transactivation is repressed by nuclear factor I. Also transactivates the long terminal repeat (LTR) promoter, thereby inducing structural gene expression, initiating the late phase of infection. It is therefore a key regulator of viral gene expression. It directly binds to and activates DNA target sites of viral promoters and those of distinct cellular genes. Required for viral replication. The chain is Protein Bel-1 (bel1) from Felis catus (Cat).